Consider the following 132-residue polypeptide: Large ribosomal subunit protein bL12 (132 aa).

Basic and acidic residues predominate over residues 100–126 (ESTPKPVKEGASKEDAEAAKKELEEAG). Residues 100 to 132 (ESTPKPVKEGASKEDAEAAKKELEEAGAKVSIK) form a disordered region.

Belongs to the bacterial ribosomal protein bL12 family. As to quaternary structure, homodimer. Part of the ribosomal stalk of the 50S ribosomal subunit. Forms a multimeric L10(L12)X complex, where L10 forms an elongated spine to which 2 to 4 L12 dimers bind in a sequential fashion. Binds GTP-bound translation factors.

Forms part of the ribosomal stalk which helps the ribosome interact with GTP-bound translation factors. Is thus essential for accurate translation. This chain is Large ribosomal subunit protein bL12, found in Thermosynechococcus vestitus (strain NIES-2133 / IAM M-273 / BP-1).